Reading from the N-terminus, the 145-residue chain is Hemoglobin subunit beta-2 (145 aa).

The Globin domain occupies 2–145 (HLTAEDRKEI…GVSHALGHGY (144 aa)). Heme b contacts are provided by H63 and H92.

This sequence belongs to the globin family. Minor hemoglobin is a tetramer of two alpha-2 chains and two beta-2 chains. As to expression, red blood cells.

Its function is as follows. Involved in oxygen transport from the lung to the various peripheral tissues. The chain is Hemoglobin subunit beta-2 (HBB2) from Triturus cristatus (Great crested newt).